Here is a 287-residue protein sequence, read N- to C-terminus: Nucleotide-binding protein Sfri_3380 (287 aa).

8-15 (GRSGSGKS) contributes to the ATP binding site. 56-59 (DVRN) serves as a coordination point for GTP.

It belongs to the RapZ-like family.

Functionally, displays ATPase and GTPase activities. This chain is Nucleotide-binding protein Sfri_3380, found in Shewanella frigidimarina (strain NCIMB 400).